Consider the following 744-residue polypeptide: Protein zyg-11 homolog B (744 aa).

LRR repeat units follow at residues 185–208 (LPRLESLDISNTSITDITALLACK), 216–236 (MHHLKCLKMTTTQILDVVREL), and 237–261 (KHLNHLDISDDKQFTSDIALRLLEQ).

The protein belongs to the zyg-11 family. In terms of assembly, interacts with ELOC/Elongin C. Part of an E3 ubiquitin ligase complex including ZYG11B, CUL2 and Elongin BC.

In terms of biological role, serves as substrate adapter subunit in the E3 ubiquitin ligase complex ZYG11B-CUL2-Elongin BC. Acts redudantly with ZER1 to target substrates bearing N-terminal glycine degrons for proteasomal degradation. Involved in the clearance of proteolytic fragments generated by caspase cleavage during apoptosis since N-terminal glycine degrons are strongly enriched at caspase cleavage sites. Also important in the quality control of protein N-myristoylation in which N-terminal glycine degrons are conditionally exposed after a failure of N-myristoylation. The sequence is that of Protein zyg-11 homolog B from Mus musculus (Mouse).